A 276-amino-acid polypeptide reads, in one-letter code: MEILPIPAESFKVGFIGAGKMAESIARGVVASGVLPPNRICTAVHSNLNRRDVFESFGVNVFSTSEEVVKESDVVIFSVKPQVVKKAVTELKSKLSKNKILVSVAAGIKLNDLQEWSGQDRFIRVMPNTPAAVGEAASVMSLGTGATEEDGAIVAMLFGAVGKILKADEKMFDAVTGLSGSGPAYIFLAIEALADGGVAAGLPRELALSLASQTVLGAATMVSKTGKHPGVLKDDVTSPGGTTIAGVHELEKGSFRATLMNAVVAAAKRSRELSQS.

The protein belongs to the pyrroline-5-carboxylate reductase family.

It is found in the cytoplasm. The catalysed reaction is L-proline + NADP(+) = (S)-1-pyrroline-5-carboxylate + NADPH + 2 H(+). It catalyses the reaction L-proline + NAD(+) = (S)-1-pyrroline-5-carboxylate + NADH + 2 H(+). The protein operates within amino-acid biosynthesis; L-proline biosynthesis; L-proline from L-glutamate 5-semialdehyde: step 1/1. This chain is Pyrroline-5-carboxylate reductase (PROC1), found in Arabidopsis thaliana (Mouse-ear cress).